The sequence spans 301 residues: Protoheme IX farnesyltransferase 1 (301 aa).

The next 9 membrane-spanning stretches (helical) occupy residues 29–49 (VVAL…PTAV), 51–71 (VQPL…AAAL), 101–121 (ALIF…VLVN), 123–143 (LTAW…TAYL), 150–170 (NIVI…TAVT), 177–197 (ALLL…ALAI), 223–243 (CILL…LVGM), 244–264 (CGPM…YKAW), and 281–301 (FSIY…YLWS).

Belongs to the UbiA prenyltransferase family. Protoheme IX farnesyltransferase subfamily.

The protein localises to the cell inner membrane. The enzyme catalyses heme b + (2E,6E)-farnesyl diphosphate + H2O = Fe(II)-heme o + diphosphate. It functions in the pathway porphyrin-containing compound metabolism; heme O biosynthesis; heme O from protoheme: step 1/1. Functionally, converts heme B (protoheme IX) to heme O by substitution of the vinyl group on carbon 2 of heme B porphyrin ring with a hydroxyethyl farnesyl side group. This Shewanella putrefaciens (strain CN-32 / ATCC BAA-453) protein is Protoheme IX farnesyltransferase 1.